The following is a 400-amino-acid chain: Phosphoglycerate kinase (400 aa).

Substrate contacts are provided by residues 22–24 (DFN), Arg-38, 61–64 (HLGR), Arg-120, and Arg-153. Residues Lys-206, Gly-297, Glu-328, and 354–357 (GGDT) contribute to the ATP site.

Belongs to the phosphoglycerate kinase family. Monomer.

The protein resides in the cytoplasm. It carries out the reaction (2R)-3-phosphoglycerate + ATP = (2R)-3-phospho-glyceroyl phosphate + ADP. The protein operates within carbohydrate degradation; glycolysis; pyruvate from D-glyceraldehyde 3-phosphate: step 2/5. In Campylobacter curvus (strain 525.92), this protein is Phosphoglycerate kinase.